A 73-amino-acid chain; its full sequence is uncharacterized protein (73 aa).

This is an uncharacterized protein from Methanocaldococcus jannaschii (strain ATCC 43067 / DSM 2661 / JAL-1 / JCM 10045 / NBRC 100440) (Methanococcus jannaschii).